We begin with the raw amino-acid sequence, 188 residues long: Inner membrane-spanning protein YciB (188 aa).

5 consecutive transmembrane segments (helical) span residues 23 to 43, 49 to 69, 73 to 93, 116 to 133, and 149 to 169; these read FQKA…IGYA, AMLP…GLIF, VFVK…LVGG, WRTL…VAII, and FRLA…PFMM.

The protein belongs to the YciB family.

It is found in the cell inner membrane. Its function is as follows. Plays a role in cell envelope biogenesis, maintenance of cell envelope integrity and membrane homeostasis. The sequence is that of Inner membrane-spanning protein YciB from Caulobacter vibrioides (strain ATCC 19089 / CIP 103742 / CB 15) (Caulobacter crescentus).